The sequence spans 122 residues: uncharacterized protein (122 aa).

Residues 1-28 (MVPGPPESVVRFFLWFCFLLPPTRKASC) form the signal peptide. An N-linked (GlcNAc...) asparagine glycan is attached at Asn49.

It is found in the secreted. This is an uncharacterized protein from Homo sapiens (Human).